A 438-amino-acid chain; its full sequence is Protein pop-1 (438 aa).

The tract at residues 1-39 (MMADEELGDEVKVFRRDEDADDDPMISGETSEQQLADDK) is disordered. Residues 1-45 (MMADEELGDEVKVFRRDEDADDDPMISGETSEQQLADDKKEAVME) form a sufficient for interaction with beta-catenin/sys-1 region. Basic and acidic residues predominate over residues 9–18 (DEVKVFRRDE). The interval 88-130 (AALPMFMPLFMNPYAAALRSPSLMFPMGAMSPTFPMFPPSPVY) is involved in nuclear asymmetry. S118 and S127 each carry phosphoserine; by LIT1. The HMG box DNA-binding region spans 192–262 (VKKPLNAFMW…THKERYPEWS (71 aa)). Positions 250-263 (DKETHKERYPEWSA) are enriched in basic and acidic residues. Disordered stretches follow at residues 250 to 288 (DKETHKERYPEWSARENYAVNKKKTKKRRDKSIPSENND), 318 to 351 (TDRSGGSDITDSQDGRGTSGAYSSSSESPSPKAN), and 378 to 438 (TTGA…MCTI). A compositionally biased stretch (basic residues) spans 270-279 (NKKKTKKRRD). Composition is skewed to polar residues over residues 324–339 (SDITDSQDGRGTSGAY) and 378–395 (TTGASTHVPSPLASSSAG). Residues 406-418 (SESDVEEEEDEQI) are compositionally biased toward acidic residues.

It belongs to the TCF/LEF family. As to quaternary structure, interacts (via N-terminal region) with beta-catenin homolog sys-1. Interacts with hda-1. Interacts with bar-1. Interacts with par-5; the interaction is direct and is enhanced by lit-1-mediated pop-1 phosphorylation. The interaction also leads to the subsequent nuclear export of pop-1. Interacts (when phosphorylated on Ser-118 and Ser-127) with lit-1; the interaction is dependent on the beta-catenin-lit-1 complex. Interacts with wrm-1. Interacts with homeobox protein egl-5. Interacts with zinc finger transcription factor ref-2; the interaction is direct and facilitates transcriptional activation; transcription may be repressed by beta-catenin/sys-1. Post-translationally, phosphorylated on Ser-118 and Ser-127 by lit-1 in the beta-catenin-lit-1 complex. Phosphorylation promotes the interaction of pop-1 and par-5 and the subsequent translocation of pop-1 from the nucleus to the cytoplasm.

It localises to the nucleus. Its subcellular location is the cytoplasm. Transcription factor. Part of the Wnt signaling asymmetry pathway. Binds to the consensus sequence, 5'-(C/T)TTTG(A/T)(A/T)(G/C)-3'. Activates or represses target gene expression, depending on upstream Wnt signals and interactions with transcription co-regulators, such as beta-catenin/sys-1 or zinc finger transcription factor ref-2. Essential for the specification of the mesodermal and endodermal cell fates in early embryos. Required in many asymmetrical cell divisions in the early embryo and during larval development. Reciprocal distribution patterns of sys-1 and pop-1 in the daughters of anterior-posterior cell divisions functions in specifying cell fate; a higher sys-1 to pop-1 ratio promotes the posterior cell fate, whereas a low sys-1 to pop-1 ratio promotes the anterior fate. Involved in modulating nuclear localization or nuclear retention of sys-1. Involved in the terminal asymmetrical division of many embryonic neuroblasts; for example in the SMDD/AIY neuron lineage. In complex with ref-2, positively modulates expression of LIM/homeobox protein ttx-3 in anterior daughter cells of the SMDD/AIY lineage. Required for asymmetrical division of somatic gonadal precursor descendants which initiate axis formation required to control organ shape. Similarly, involved in asymmetrical division of seam cells, a stem cell-like lineage. Represses expression of target genes via its interaction with hda-1 histone deacetylase. Required for specification of the M lineage-derived coelomocyte and sex myoblast fate. Regulates coelomocyte fate by positively regulating proliferation and ceh-34 and possibly eya-1 expression in M.dlpa and M.drpa precursors. This is Protein pop-1 from Caenorhabditis elegans.